Consider the following 120-residue polypeptide: Ribosome-binding factor A (120 aa).

The protein belongs to the RbfA family. As to quaternary structure, monomer. Binds 30S ribosomal subunits, but not 50S ribosomal subunits or 70S ribosomes.

It localises to the cytoplasm. In terms of biological role, one of several proteins that assist in the late maturation steps of the functional core of the 30S ribosomal subunit. Associates with free 30S ribosomal subunits (but not with 30S subunits that are part of 70S ribosomes or polysomes). Required for efficient processing of 16S rRNA. May interact with the 5'-terminal helix region of 16S rRNA. In Limosilactobacillus fermentum (strain NBRC 3956 / LMG 18251) (Lactobacillus fermentum), this protein is Ribosome-binding factor A.